The primary structure comprises 1019 residues: Photoactivated adenylate cyclase subunit alpha-like protein 1224-5/1F (1019 aa).

The BLUF 1 domain occupies 55-148; sequence LRRLMYLSAS…GRMYGWWHLK (94 aa). The Guanylate cyclase 1 domain occupies 204 to 332; that stretch reads VVTVIYLVEF…DWINSASRIT (129 aa). Residues 467 to 559 form the BLUF 2 domain; that stretch reads LITLTYISQA…GVYGSPLDMT (93 aa). In terms of domain architecture, Guanylate cyclase 2 spans 615-744; it reads VMLATAISSF…EVRARVLEVE (130 aa). The interval 825–863 is disordered; that stretch reads NISCRGGNPPAGGIPTSPKVRPPGRTNSVSSYTPDPKQA.

Belongs to the adenylyl cyclase class-4/guanylyl cyclase family. In terms of assembly, heterotetramer of two alpha and two beta subunits.

The protein resides in the cell projection. The protein localises to the cilium. It localises to the flagellum. The polypeptide is Photoactivated adenylate cyclase subunit alpha-like protein 1224-5/1F (Euglena gracilis).